The sequence spans 470 residues: MGIGRVTQVMGPVIDVRFEHNEVPEINNALHIEVPKEDGALQLTLEVALQLGDDVVRTIAMDSTDGVQRGMEVKDTGRDISVPVGDVTLGRVFNVLGETIDLDEKIDDSVRRDPIHRQAPGFDELSTKVEILETGIKVVDLLAPYIKGGKIGLFGGAGVGKTVLIQELINNIAQEHGGISVFAGVGERTREGNDLYYEMSDSGVIKKTAMVFGQMNEPPGARMRVALSGLTMAEYFRDEEGQDVLLFIDNIFRFTQAGSEVSALLGRMPSAVGYQPTLATEMGQLQERISSTNKGSVTSIQAVFVPADDYTDPAPATTFAHLDSTTNLERKLTEMGIYPAVDPLASTSRALEPSVVGQEHYDVAREVQSTLQKYRELQDIIAILGMDELSDEDKQTVERARRIQFFLSQNFHVAEQFTGQKGSYVPVKTTVADFRDILDGKYDHIPEDAFRLVGSMEDVIEKAKDMGVEV.

155 to 162 (GGAGVGKT) provides a ligand contact to ATP.

The protein belongs to the ATPase alpha/beta chains family. As to quaternary structure, F-type ATPases have 2 components, CF(1) - the catalytic core - and CF(0) - the membrane proton channel. CF(1) has five subunits: alpha(3), beta(3), gamma(1), delta(1), epsilon(1). CF(0) has three main subunits: a(1), b(2) and c(9-12). The alpha and beta chains form an alternating ring which encloses part of the gamma chain. CF(1) is attached to CF(0) by a central stalk formed by the gamma and epsilon chains, while a peripheral stalk is formed by the delta and b chains.

The protein localises to the cell membrane. The catalysed reaction is ATP + H2O + 4 H(+)(in) = ADP + phosphate + 5 H(+)(out). Functionally, produces ATP from ADP in the presence of a proton gradient across the membrane. The catalytic sites are hosted primarily by the beta subunits. The chain is ATP synthase subunit beta from Staphylococcus epidermidis (strain ATCC 35984 / DSM 28319 / BCRC 17069 / CCUG 31568 / BM 3577 / RP62A).